We begin with the raw amino-acid sequence, 392 residues long: Putative glutamate--cysteine ligase 2 (392 aa).

Residues 347 to 367 (AARKHGAAPEPGTRTRGDDGV) form a disordered region.

It belongs to the glutamate--cysteine ligase type 2 family. YbdK subfamily.

It carries out the reaction L-cysteine + L-glutamate + ATP = gamma-L-glutamyl-L-cysteine + ADP + phosphate + H(+). Its function is as follows. ATP-dependent carboxylate-amine ligase which exhibits weak glutamate--cysteine ligase activity. This chain is Putative glutamate--cysteine ligase 2, found in Corynebacterium jeikeium (strain K411).